The chain runs to 89 residues: Acyl carrier protein MbtL (89 aa).

Positions 8–83 (NHVSAELLGI…DLQAAIAAEP (76 aa)) constitute a Carrier domain. The residue at position 43 (Ser-43) is an O-(pantetheine 4'-phosphoryl)serine.

4'-phosphopantetheine is transferred from CoA to a specific serine of apo-ACP, leading to the activated holo-ACP form.

It localises to the cytoplasm. The protein operates within siderophore biosynthesis; mycobactin biosynthesis. Functionally, acyl carrier protein involved in the formation of acyl-S-ACP intermediates within the mycobactin biosynthesis process. In Mycolicibacterium paratuberculosis (strain ATCC BAA-968 / K-10) (Mycobacterium paratuberculosis), this protein is Acyl carrier protein MbtL (mbtL).